The sequence spans 60 residues: uncharacterized protein (60 aa).

A helical transmembrane segment spans residues 11-33 (VFTVGFITGGVTPVMVSFVWPAA). 2 N-linked (GlcNAc...) asparagine; by host glycosylation sites follow: Asn40 and Asn57.

It localises to the host membrane. This is an uncharacterized protein from African swine fever virus (strain Badajoz 1971 Vero-adapted) (Ba71V).